Here is a 478-residue protein sequence, read N- to C-terminus: Cytochrome c-552 (478 aa).

The N-terminal stretch at 1–26 (MARKTLRARRFFSLIFPFFFITSVYA) is a signal peptide. Heme c is bound at residue His94. Heme-binding residues include Cys122, Cys125, and Lys126. The heme c site is built by Cys160, Cys163, His164, Cys209, Cys212, and His213. Ca(2+) contacts are provided by Glu215, Tyr216, Lys261, and Gln263. Position 216 (Tyr216) interacts with substrate. A substrate-binding site is contributed by His264. Heme c is bound by residues His275, Cys282, Cys285, His286, His301, Cys314, Cys317, His318, and His393.

The protein belongs to the cytochrome c-552 family. It depends on Ca(2+) as a cofactor. Heme c is required as a cofactor.

It is found in the periplasm. It catalyses the reaction 6 Fe(III)-[cytochrome c] + NH4(+) + 2 H2O = 6 Fe(II)-[cytochrome c] + nitrite + 8 H(+). It functions in the pathway nitrogen metabolism; nitrate reduction (assimilation). Its function is as follows. Catalyzes the reduction of nitrite to ammonia, consuming six electrons in the process. The chain is Cytochrome c-552 from Salmonella dublin (strain CT_02021853).